Reading from the N-terminus, the 397-residue chain is Cephalotocin receptor 1 (397 aa).

Topologically, residues 1-48 (MRYITTHPNEISTQIWNNFSSTEIWSNFSAAKNETQPIRRNQDLANAE) are extracellular. N-linked (GlcNAc...) asparagine glycosylation is found at Asn18, Asn27, and Asn33. A helical transmembrane segment spans residues 49–69 (VITLAVVIIITVIGNSIVLIT). Over 70 to 91 (LFQRRKKLTRMHLFILHLSVTD) the chain is Cytoplasmic. The helical transmembrane segment at 92 to 112 (LFVAFFNNLPQMIWDITFLFL) threads the bilayer. Residues 113-120 (GTDLLCRL) lie on the Extracellular side of the membrane. Cysteines 118 and 194 form a disulfide. The chain crosses the membrane as a helical span at residues 121–141 (VTYLQSVAMYASSYVLVATAI). The Cytoplasmic segment spans residues 142 to 162 (DRYFAICHPLSSHKWTTARVH). The chain crosses the membrane as a helical span at residues 163–183 (VMVFIAWMLSFLFSTPQLFIW). The Extracellular segment spans residues 184-205 (SMQFSNIGLTCQATFDPEWTLK). The chain crosses the membrane as a helical span at residues 206-226 (FYITWLTVAIWILPTIALTLF). Topologically, residues 227-293 (YGMMCFAVWK…RGISRAKVRS (67 aa)) are cytoplasmic. The helical transmembrane segment at 294-314 (VALTLSVVACCFICWSPFFVC) threads the bilayer. Over 315–331 (QMWAAWDENAPYSGAIY) the chain is Extracellular. A helical membrane pass occupies residues 332 to 352 (TILLLLSSLNSCTNPWIYMIF). Topologically, residues 353–397 (SVFQHRAKTSRFVNDEETTSVTVLSSRNDIRLMSMKKKLEQTARN) are cytoplasmic.

It belongs to the G-protein coupled receptor 1 family. Vasopressin/oxytocin receptor subfamily. As to expression, present in brain, buccal ganglion, gastric ganglion, olfactory lube, peduncle lobe, optical lobe, pancreas, the oviduct and the ovary.

It is found in the cell membrane. Functionally, acts as a receptor for cephalotocin. In Octopus vulgaris (Common octopus), this protein is Cephalotocin receptor 1.